We begin with the raw amino-acid sequence, 142 residues long: Alpha-lactalbumin (142 aa).

The signal sequence occupies residues 1–19 (MMSFVSLLLVGILFHATQA). The C-type lysozyme domain occupies 20–142 (EQLTKCEVFR…KLDQWLCEKL (123 aa)). 4 disulfides stabilise this stretch: cysteine 25/cysteine 139, cysteine 47/cysteine 130, cysteine 80/cysteine 96, and cysteine 92/cysteine 110. Asparagine 64 is a glycosylation site (N-linked (GlcNAc...) asparagine). 5 residues coordinate Ca(2+): lysine 98, aspartate 101, aspartate 103, aspartate 106, and aspartate 107.

This sequence belongs to the glycosyl hydrolase 22 family. Lactose synthase (LS) is a heterodimer of a catalytic component, beta1,4-galactosyltransferase (beta4Gal-T1) and a regulatory component, alpha-lactalbumin (LA). As to expression, mammary gland specific. Secreted in milk.

The protein resides in the secreted. Functionally, regulatory subunit of lactose synthase, changes the substrate specificity of galactosyltransferase in the mammary gland making glucose a good acceptor substrate for this enzyme. This enables LS to synthesize lactose, the major carbohydrate component of milk. In other tissues, galactosyltransferase transfers galactose onto the N-acetylglucosamine of the oligosaccharide chains in glycoproteins. In Bos taurus (Bovine), this protein is Alpha-lactalbumin (LALBA).